The chain runs to 429 residues: MTKETASFFTDRLAAADPDVLTAINHELNRQRKQIELIASENIVSRAVLEAQGSVFTNKYAEGYPGKRYYQGCAPSDEIETLAIERAKKLFGSEFVNVQPHSGAQANGAVLLAVAKPGDTIMGLSLDAGGHLTHGAKAAMSGKWFNAVQYAVHPETQLIDYDQVRDLALKNKPRVIIAGGSAYPRHIDFAFFRKVADEVGATFMVDMAHFAGLVAGGVHPSPVPHAHITTTTTHKTLRGPRGGMILTDDPALAKKINSAVFPGMQGGPLMHVIAAKAVAFGEALQPSFKEYAKAVVENAQALAARLKERGSDLVTGGTDTHLALVDLRPLGVTGRDADCALERAGITCNKNGIPFDPLPPVKTSGIRLGSPAATTRGFRKAEFLQVADMIADVLDALSSKGEQGDPAVETAVRQRVEALCDRFPLYPEL.

(6S)-5,6,7,8-tetrahydrofolate contacts are provided by residues Leu126 and 130–132 (GHL). At Lys235 the chain carries N6-(pyridoxal phosphate)lysine.

Belongs to the SHMT family. In terms of assembly, homodimer. Pyridoxal 5'-phosphate is required as a cofactor.

Its subcellular location is the cytoplasm. The enzyme catalyses (6R)-5,10-methylene-5,6,7,8-tetrahydrofolate + glycine + H2O = (6S)-5,6,7,8-tetrahydrofolate + L-serine. It functions in the pathway one-carbon metabolism; tetrahydrofolate interconversion. It participates in amino-acid biosynthesis; glycine biosynthesis; glycine from L-serine: step 1/1. Its function is as follows. Catalyzes the reversible interconversion of serine and glycine with tetrahydrofolate (THF) serving as the one-carbon carrier. This reaction serves as the major source of one-carbon groups required for the biosynthesis of purines, thymidylate, methionine, and other important biomolecules. Also exhibits THF-independent aldolase activity toward beta-hydroxyamino acids, producing glycine and aldehydes, via a retro-aldol mechanism. The protein is Serine hydroxymethyltransferase of Zymomonas mobilis subsp. mobilis (strain ATCC 31821 / ZM4 / CP4).